The chain runs to 483 residues: Acetyl-coenzyme A carboxylase carboxyl transferase subunit beta, chloroplastic (483 aa).

A CoA carboxyltransferase N-terminal domain is found at 219 to 483 (LWVQCENCYG…LHTFFPLNQN (265 aa)). Residues Cys-223, Cys-226, Cys-242, and Cys-245 each coordinate Zn(2+). The C4-type zinc-finger motif lies at 223–245 (CENCYGLNYKKFFKSKMNLCEQC).

This sequence belongs to the AccD/PCCB family. In terms of assembly, acetyl-CoA carboxylase is a heterohexamer composed of biotin carboxyl carrier protein, biotin carboxylase and 2 subunits each of ACCase subunit alpha and ACCase plastid-coded subunit beta (accD). It depends on Zn(2+) as a cofactor.

It is found in the plastid. The protein resides in the chloroplast stroma. The catalysed reaction is N(6)-carboxybiotinyl-L-lysyl-[protein] + acetyl-CoA = N(6)-biotinyl-L-lysyl-[protein] + malonyl-CoA. The protein operates within lipid metabolism; malonyl-CoA biosynthesis; malonyl-CoA from acetyl-CoA: step 1/1. Functionally, component of the acetyl coenzyme A carboxylase (ACC) complex. Biotin carboxylase (BC) catalyzes the carboxylation of biotin on its carrier protein (BCCP) and then the CO(2) group is transferred by the transcarboxylase to acetyl-CoA to form malonyl-CoA. This Guizotia abyssinica (Niger) protein is Acetyl-coenzyme A carboxylase carboxyl transferase subunit beta, chloroplastic.